The sequence spans 283 residues: Probable endonuclease 4 (283 aa).

The Zn(2+) site is built by His-66, His-106, Glu-141, Asp-174, His-177, His-211, Asp-224, His-226, and Glu-256.

The protein belongs to the AP endonuclease 2 family. Requires Zn(2+) as cofactor.

The enzyme catalyses Endonucleolytic cleavage to 5'-phosphooligonucleotide end-products.. Endonuclease IV plays a role in DNA repair. It cleaves phosphodiester bonds at apurinic or apyrimidinic (AP) sites, generating a 3'-hydroxyl group and a 5'-terminal sugar phosphate. The protein is Probable endonuclease 4 of Carboxydothermus hydrogenoformans (strain ATCC BAA-161 / DSM 6008 / Z-2901).